Consider the following 354-residue polypeptide: Guanine nucleotide-binding protein G(i) subunit alpha-1 (354 aa).

G2 carries the N-myristoyl glycine lipid modification. The S-palmitoyl cysteine moiety is linked to residue C3. The G-alpha domain maps to 32–354 (REVKLLLLGA…KNNLKDCGLF (323 aa)). The tract at residues 35 to 48 (KLLLLGAGESGKST) is G1 motif. GTP-binding positions include 43 to 48 (ESGKST), 150 to 151 (DS), and 175 to 178 (LRTR). S47 contributes to the Mg(2+) binding site. The tract at residues 173–181 (DVLRTRVKT) is G2 motif. Position 181 (T181) interacts with Mg(2+). The segment at 196–205 (FKMFDVGGQR) is G3 motif. GTP contacts are provided by residues 200–204 (DVGGQ), 269–272 (NKKD), and A326. The G4 motif stretch occupies residues 265–272 (ILFLNKKD). Residues 324–329 (TCATDT) form a G5 motif region.

This sequence belongs to the G-alpha family. G(i/o/t/z) subfamily. In terms of assembly, heterotrimeric G proteins are composed of 3 units; alpha, beta and gamma. The alpha chain contains the guanine nucleotide binding site. Part of a spindle orientation complex. Identified in complex with the beta subunit GNB1 and the gamma subunit GNG1. Identified in complex with the beta subunit GNB1 and the gamma subunit GNG2. GTP binding causes dissociation of the heterotrimer, liberating the individual subunits so that they can interact with downstream effector proteins. Post-translationally, myristoylation at Gly-2 is required for membrane anchoring before palmitoylation. In terms of processing, palmitoylation at Cys-3 varies with membrane lipid composition.

The protein resides in the nucleus. The protein localises to the cytoplasm. Its subcellular location is the cell membrane. It is found in the cytoskeleton. It localises to the microtubule organizing center. The protein resides in the centrosome. The protein localises to the cell cortex. Its subcellular location is the membrane. It carries out the reaction GTP + H2O = GDP + phosphate + H(+). In terms of biological role, guanine nucleotide-binding proteins (G proteins) function as transducers downstream of G protein-coupled receptors (GPCRs) in numerous signaling cascades. The alpha chain contains the guanine nucleotide binding site and alternates between an active, GTP-bound state and an inactive, GDP-bound state. Signaling by an activated GPCR promotes GDP release and GTP binding. The alpha subunit has a low GTPase activity that converts bound GTP to GDP, thereby terminating the signal. Both GDP release and GTP hydrolysis are modulated by numerous regulatory proteins. Signaling is mediated via effector proteins, such as adenylate cyclase. Inhibits adenylate cyclase activity, leading to decreased intracellular cAMP levels. Required for cortical dynein-dynactin complex recruitment during metaphase. In Oryzias latipes (Japanese rice fish), this protein is Guanine nucleotide-binding protein G(i) subunit alpha-1 (gnai1).